The primary structure comprises 135 residues: Fluoride-specific ion channel FluC (135 aa).

Helical transmembrane passes span 12-32, 42-62, 70-90, and 106-126; these read FLVI…LGLS, LGTL…VGIF, LAWK…FSTF, and AIGL…LGLL. Residues Gly82 and Thr85 each coordinate Na(+).

The protein belongs to the fluoride channel Fluc/FEX (TC 1.A.43) family.

The protein localises to the cell inner membrane. It carries out the reaction fluoride(in) = fluoride(out). Its activity is regulated as follows. Na(+) is not transported, but it plays an essential structural role and its presence is essential for fluoride channel function. Fluoride-specific ion channel. Important for reducing fluoride concentration in the cell, thus reducing its toxicity. This is Fluoride-specific ion channel FluC from Dechloromonas aromatica (strain RCB).